A 349-amino-acid chain; its full sequence is MAFKIASSPHVTRNLHTSTVMQRVILCLLPGLVVQCAFFGWGTLVQVLLAILVALSCEAAVMKLRNRNIKASLSDNSAMLTAILIGVAIPPLAPWWMIVMGTAFAIVIVKHLYGGLGHNLFNPAMAAYVLLLVSFPVQMTTWIAPSTVALHSPSLVESLQLIFNVGAHVNMEQFRLGIDGMTMATPLDTLKTDLSMGLTTTESLTKAIFDGSTGVGWFWVNLAYLAGGLVLLKLKAIRWHISTGVLLGLFVASSIGFLLSPDTQASPLMHLFSGATMLAAFFIATDPVTAATSPRGRIIFGALIGVLVYIIRTKGGYPDAFAFAVLLANLCAPFIDYYVRPRTYGHSTS.

The next 3 membrane-spanning stretches (helical) occupy residues 20–42 (VMQRVILCLLPGLVVQCAFFGWG), 77–99 (SAMLTAILIGVAIPPLAPWWMIV), and 124–144 (AMAAYVLLLVSFPVQMTTWIA). Threonine 185 is subject to FMN phosphoryl threonine. A run of 5 helical transmembrane segments spans residues 212–232 (STGVGWFWVNLAYLAGGLVLL), 239–259 (WHISTGVLLGLFVASSIGFLL), 265–285 (ASPLMHLFSGATMLAAFFIAT), 291–311 (ATSPRGRIIFGALIGVLVYII), and 315–335 (GGYPDAFAFAVLLANLCAPFI).

Belongs to the NqrB/RnfD family. The complex is composed of six subunits: RnfA, RnfB, RnfC, RnfD, RnfE and RnfG. The cofactor is FMN.

The protein resides in the cell inner membrane. In terms of biological role, part of a membrane-bound complex that couples electron transfer with translocation of ions across the membrane. This chain is Ion-translocating oxidoreductase complex subunit D, found in Shewanella baltica (strain OS195).